The primary structure comprises 213 residues: Ras-related protein Rab-25 (213 aa).

GTP contacts are provided by S21, G24, K25, T26, N27, S38, H39, T43, and T44. Residue T26 participates in Mg(2+) binding. Short sequence motifs (switch) lie at residues 35 to 49 (NEFS…GVEF) and 67 to 84 (DTAG…YYRG). Mg(2+) is bound by residues T44 and D67. The GTP site is built by G70, N125, K126, D128, A156, and L157. 2 S-geranylgeranyl cysteine lipidation sites follow: C209 and C210. At C210 the chain carries Cysteine methyl ester. Positions 211–213 (ISL) are cleaved as a propeptide — removed in mature form.

Belongs to the small GTPase superfamily. Rab family. In terms of assembly, interacts (GTP-bound form) with RAB11FIP1, RAB11FIP2, RAB11FIP3 and RAB11FIP4. Interacts (via the hypervariable C-terminal region) with ITGB1 (via the cytoplasmic region); the interaction is GTP-dependent. Interacts with ITGAV. Associates with the integrin alpha-V/beta-1 heterodimer. Interacts with VPS33B. The cofactor is Mg(2+).

It is found in the cell membrane. The protein localises to the cell projection. The protein resides in the pseudopodium membrane. It localises to the cytoplasmic vesicle. It carries out the reaction GTP + H2O = GDP + phosphate + H(+). Its activity is regulated as follows. Regulated by guanine nucleotide exchange factors (GEFs) which promote the exchange of bound GDP for free GTP. Regulated by GTPase activating proteins (GAPs) which increase the GTP hydrolysis activity. Inhibited by GDP dissociation inhibitors (GDIs) which prevent Rab-GDP dissociation. In terms of biological role, the small GTPases Rab are key regulators of intracellular membrane trafficking, from the formation of transport vesicles to their fusion with membranes. Rabs cycle between an inactive GDP-bound form and an active GTP-bound form that is able to recruit to membranes different set of downstream effectors directly responsible for vesicle formation, movement, tethering and fusion. RAB25 regulates epithelial cell differentiation, proliferation and survival, thereby playing key roles in tumorigenesis. Promotes invasive migration of cells in which it functions to localize and maintain integrin alpha-V/beta-1 at the tips of extending pseudopodia. Involved in the regulation of epithelial morphogenesis through the control of CLDN4 expression and localization at tight junctions. May selectively regulate the apical recycling pathway. Together with MYO5B regulates transcytosis. This is Ras-related protein Rab-25 (RAB25) from Canis lupus familiaris (Dog).